The primary structure comprises 110 residues: Large ribosomal subunit protein uL22 (110 aa).

This sequence belongs to the universal ribosomal protein uL22 family. As to quaternary structure, part of the 50S ribosomal subunit.

This protein binds specifically to 23S rRNA; its binding is stimulated by other ribosomal proteins, e.g. L4, L17, and L20. It is important during the early stages of 50S assembly. It makes multiple contacts with different domains of the 23S rRNA in the assembled 50S subunit and ribosome. In terms of biological role, the globular domain of the protein is located near the polypeptide exit tunnel on the outside of the subunit, while an extended beta-hairpin is found that lines the wall of the exit tunnel in the center of the 70S ribosome. The sequence is that of Large ribosomal subunit protein uL22 from Bdellovibrio bacteriovorus (strain ATCC 15356 / DSM 50701 / NCIMB 9529 / HD100).